The following is a 383-amino-acid chain: Serine protease 23 (383 aa).

Positions 1 to 23 are cleaved as a signal peptide; sequence MAGIPGLLILLLVLLCVFMQVSP. Residue asparagine 93 is glycosylated (N-linked (GlcNAc...) asparagine). A disulfide bridge links cysteine 160 with cysteine 176. Catalysis depends on histidine 175, which acts as the Charge relay system. Asparagine 207 is a glycosylation site (N-linked (GlcNAc...) asparagine). Residues aspartate 240 and serine 316 each act as charge relay system in the active site.

The protein belongs to the peptidase S1 family.

It localises to the secreted. This chain is Serine protease 23 (Prss23), found in Rattus norvegicus (Rat).